The following is a 183-amino-acid chain: Dermatopontin (183 aa).

Glutamine 1 carries the pyrrolidone carboxylic acid modification. Tyrosine 5 is subject to Sulfotyrosine. A run of 4 repeats spans residues proline 8–proline 61, aspartate 52–tyrosine 57, threonine 62–tyrosine 117, and aspartate 107–phenylalanine 112. Residues proline 8–tyrosine 117 are 2 X 53-55 AA tandem repeats. 5 cysteine pairs are disulfide-bonded: cysteine 32/cysteine 59, cysteine 72/cysteine 114, cysteine 88/cysteine 115, cysteine 121/cysteine 178, and cysteine 125/cysteine 171. Positions aspartate 52–phenylalanine 168 are 3 X 6 AA tandem repeats of D-R-[EQ]-W-[NQK]-[FY]. Tyrosine 144, tyrosine 146, tyrosine 148, and tyrosine 149 each carry sulfotyrosine. One copy of the 2-3 repeat lies at aspartate 163–phenylalanine 168. Tyrosine 176 is modified (sulfotyrosine).

It belongs to the dermatopontin family. In terms of assembly, interacts with TGFB1, DCN and collagen. Sulfated on tyrosine residue(s). As to expression, detected in skin, skeletal muscle, heart, lung, articular cartilage, long bone and calvaria. Smaller amounts detected in kidney. Not detected in brain, liver or spleen.

Its subcellular location is the secreted. It is found in the extracellular space. The protein localises to the extracellular matrix. Functionally, seems to mediate adhesion by cell surface integrin binding. May serve as a communication link between the dermal fibroblast cell surface and its extracellular matrix environment. Enhances TGFB1 activity. Inhibits cell proliferation. Accelerates collagen fibril formation, and stabilizes collagen fibrils against low-temperature dissociation. This chain is Dermatopontin (DPT), found in Sus scrofa (Pig).